Here is a 73-residue protein sequence, read N- to C-terminus: Translation initiation factor IF-1 (73 aa).

An S1-like domain is found at 1–73; the sequence is MAKKDGAIEV…TRGRIVYRYK (73 aa).

Belongs to the IF-1 family. Component of the 30S ribosomal translation pre-initiation complex which assembles on the 30S ribosome in the order IF-2 and IF-3, IF-1 and N-formylmethionyl-tRNA(fMet); mRNA recruitment can occur at any time during PIC assembly.

It localises to the cytoplasm. In terms of biological role, one of the essential components for the initiation of protein synthesis. Stabilizes the binding of IF-2 and IF-3 on the 30S subunit to which N-formylmethionyl-tRNA(fMet) subsequently binds. Helps modulate mRNA selection, yielding the 30S pre-initiation complex (PIC). Upon addition of the 50S ribosomal subunit IF-1, IF-2 and IF-3 are released leaving the mature 70S translation initiation complex. This chain is Translation initiation factor IF-1, found in Mycolicibacterium gilvum (strain PYR-GCK) (Mycobacterium gilvum (strain PYR-GCK)).